A 601-amino-acid polypeptide reads, in one-letter code: Vesicular glutamate transporter 3 (601 aa).

Residues methionine 1–tyrosine 89 are Cytoplasmic-facing. The helical transmembrane segment at isoleucine 90 to glycine 110 threads the bilayer. Residues valine 111–glycine 143 are Vesicular-facing. Asparagine 119 carries an N-linked (GlcNAc...) asparagine glycan. Residues leucine 144–serine 164 form a helical membrane-spanning segment. At asparagine 165 to lysine 166 the chain is on the cytoplasmic side. The helical transmembrane segment at phenylalanine 167 to isoleucine 187 threads the bilayer. Residues proline 188–tyrosine 195 lie on the Vesicular side of the membrane. A helical transmembrane segment spans residues glycine 196–cysteine 216. The Cytoplasmic segment spans residues histidine 217 to threonine 234. A helical transmembrane segment spans residues threonine 235–valine 255. The Vesicular portion of the chain corresponds to glutamine 256–serine 262. The chain crosses the membrane as a helical span at residues valine 263–tyrosine 283. The Cytoplasmic portion of the chain corresponds to glutamate 284–leucine 327. Residues proline 328–isoleucine 348 traverse the membrane as a helical segment. The Vesicular portion of the chain corresponds to serine 349–glycine 366. A helical transmembrane segment spans residues leucine 367–alanine 387. Residues aspartate 388–lysine 403 are Cytoplasmic-facing. A helical membrane pass occupies residues isoleucine 404–histidine 424. Over threonine 425–lysine 426 the chain is Vesicular. The chain crosses the membrane as a helical span at residues glycine 427–phenylalanine 447. At asparagine 448–serine 460 the chain is on the cytoplasmic side. A helical transmembrane segment spans residues isoleucine 461–valine 481. Over glycine 482–glutamine 494 the chain is Vesicular. The helical transmembrane segment at asparagine 495–alanine 515 threads the bilayer. Topologically, residues serine 516–serine 598 are cytoplasmic. Positions arginine 576–serine 601 are disordered.

The protein belongs to the major facilitator superfamily. Sodium/anion cotransporter family. VGLUT subfamily. In terms of tissue distribution, expressed in restricted areas of the brain. Highest expression is found in the neurons of the basal forebrain, the hippocampal formation, and the majority of the neurons of the mesencephalic raphe nuclei. Expressed in inner hair cells of the ear.

The protein localises to the cytoplasmic vesicle. The protein resides in the secretory vesicle. It localises to the synaptic vesicle membrane. Its subcellular location is the cell membrane. It is found in the synapse. The protein localises to the synaptosome. The catalysed reaction is L-glutamate(out) = L-glutamate(in). It catalyses the reaction 3 Na(+)(out) + phosphate(out) = 3 Na(+)(in) + phosphate(in). The enzyme catalyses chloride(in) = chloride(out). With respect to regulation, the L-glutamate uniporter activity exhibits a biphasic dependence on chloride concentration. Chloride channel activity is allosterically activated by lumenal H(+) and Cl(-) leading to synaptic vesicles acidification. The L-glutamate transport activity is allosterically activated by lumenal H(+) and Cl(-), preventing non-vesicular L-glutamate release. Its function is as follows. Multifunctional transporter that transports L-glutamate as well as multiple ions such as chloride, sodium and phosphate. At the synaptic vesicle membrane, mainly functions as an uniporter that mediates the uptake of L-glutamate into synaptic vesicles at presynaptic nerve terminals of excitatory neural cells. The L-glutamate uniporter activity is electrogenic and is driven by the proton electrochemical gradient, mainly by the electrical gradient established by the vacuolar H(+)-ATPase across the synaptic vesicle membrane. In addition, functions as a chloride channel that allows a chloride permeation through the synaptic vesicle membrane that affects the proton electrochemical gradient and promotes synaptic vesicles acidification. At the plasma membrane, following exocytosis, functions as a symporter of Na(+) and phosphate from the extracellular space to the cytoplasm allowing synaptic phosphate homeostasis regulation. The symporter activity is electrogenic. Moreover, operates synergistically with SLC18A3/VACHT under a constant H(+) gradient, thereby allowing striatal vesicular acetylcholine uptake. The sequence is that of Vesicular glutamate transporter 3 from Mus musculus (Mouse).